Consider the following 200-residue polypeptide: LHFPL tetraspan subfamily member 6 protein (200 aa).

The N-terminal stretch at 1 to 23 (MASSLTCTGVIWALLSFLSAATS) is a signal peptide. Helical transmembrane passes span 84-104 (ICTI…LTAL), 123-143 (GIQF…PLGW), and 166-186 (IGWA…LCTW).

Belongs to the LHFP family.

The protein resides in the membrane. In Rattus norvegicus (Rat), this protein is LHFPL tetraspan subfamily member 6 protein.